A 515-amino-acid chain; its full sequence is Glucose-6-phosphate 1-dehydrogenase (515 aa).

Position 2 is an N-acetylalanine (Ala2). Residue Ser8 is modified to Phosphoserine. Position 10 is a phosphothreonine (Thr10). Residues 38 to 45 (GASGDLAK) and Arg72 each bind NADP(+). At Lys89 the chain carries N6-acetyllysine. 2 residues coordinate NADP(+): Tyr147 and Lys171. D-glucose 6-phosphate contacts are provided by residues Lys171, 201 to 205 (HYLGK), Glu239, and Asp258. Position 171 is an N6-(2-hydroxyisobutyryl)lysine; alternate (Lys171). Residue Lys171 is modified to N6-acetyllysine; alternate. His263 functions as the Proton acceptor in the catalytic mechanism. Arg357 serves as a coordination point for NADP(+). Residues Lys360 and Arg365 each contribute to the D-glucose 6-phosphate site. The NADP(+) site is built by Lys366, Arg370, and Arg393. Gln395 is a binding site for D-glucose 6-phosphate. NADP(+)-binding positions include 401–403 (YTK) and 421–423 (DLT). Lys403 bears the N6-acetyllysine mark. Residue Lys432 is modified to N6-acetyllysine. Arg487 lines the NADP(+) pocket. An N6-acetyllysine modification is found at Lys497. NADP(+)-binding residues include Tyr503 and Trp509. Tyr503 is modified (phosphotyrosine).

The protein belongs to the glucose-6-phosphate dehydrogenase family. As to quaternary structure, homotetramer; dimer of dimers. Interacts with SIRT2; the interaction is enhanced by H(2)O(2) treatment. Forms a ternary complex with ALDOB and TP53; this interaction is direct. ALDOB stabilizes the complex inhibiting G6PD activity and keeping oxidative pentose phosphate metabolism in check. Post-translationally, acetylated by ELP3 at Lys-403; acetylation inhibits its homodimerization and enzyme activity. Deacetylated by SIRT2 at Lys-403; deacetylation stimulates its enzyme activity.

The protein resides in the cytoplasm. It localises to the cytosol. Its subcellular location is the membrane. It carries out the reaction D-glucose 6-phosphate + NADP(+) = 6-phospho-D-glucono-1,5-lactone + NADPH + H(+). It participates in carbohydrate degradation; pentose phosphate pathway; D-ribulose 5-phosphate from D-glucose 6-phosphate (oxidative stage): step 1/3. Its function is as follows. Cytosolic glucose-6-phosphate dehydrogenase that catalyzes the first and rate-limiting step of the oxidative branch within the pentose phosphate pathway/shunt, an alternative route to glycolysis for the dissimilation of carbohydrates and a major source of reducing power and metabolic intermediates for fatty acid and nucleic acid biosynthetic processes. This Cricetulus griseus (Chinese hamster) protein is Glucose-6-phosphate 1-dehydrogenase (G6PD).